The chain runs to 406 residues: Phosphopentomutase (406 aa).

Residues D10, D305, H310, D346, H347, and H358 each contribute to the Mn(2+) site.

It belongs to the phosphopentomutase family. The cofactor is Mn(2+).

It is found in the cytoplasm. It carries out the reaction 2-deoxy-alpha-D-ribose 1-phosphate = 2-deoxy-D-ribose 5-phosphate. The enzyme catalyses alpha-D-ribose 1-phosphate = D-ribose 5-phosphate. It functions in the pathway carbohydrate degradation; 2-deoxy-D-ribose 1-phosphate degradation; D-glyceraldehyde 3-phosphate and acetaldehyde from 2-deoxy-alpha-D-ribose 1-phosphate: step 1/2. In terms of biological role, isomerase that catalyzes the conversion of deoxy-ribose 1-phosphate (dRib-1-P) and ribose 1-phosphate (Rib-1-P) to deoxy-ribose 5-phosphate (dRib-5-P) and ribose 5-phosphate (Rib-5-P), respectively. The sequence is that of Phosphopentomutase from Rhizobium leguminosarum bv. trifolii (strain WSM2304).